Reading from the N-terminus, the 396-residue chain is Elongation factor Tu (396 aa).

The tr-type G domain occupies 10–206 (KPHVNVGTIG…ALDSYIPTPK (197 aa)). Positions 19–26 (GHVDHGKT) are G1. 19-26 (GHVDHGKT) lines the GTP pocket. Thr-26 contributes to the Mg(2+) binding site. Positions 60 to 64 (GITIS) are G2. Residues 81 to 84 (DCPG) are G3. GTP contacts are provided by residues 81–85 (DCPGH) and 136–139 (NKAD). Residues 136 to 139 (NKAD) are G4. The G5 stretch occupies residues 174-176 (SAL).

This sequence belongs to the TRAFAC class translation factor GTPase superfamily. Classic translation factor GTPase family. EF-Tu/EF-1A subfamily. In terms of assembly, monomer.

Its subcellular location is the cytoplasm. The enzyme catalyses GTP + H2O = GDP + phosphate + H(+). Its function is as follows. GTP hydrolase that promotes the GTP-dependent binding of aminoacyl-tRNA to the A-site of ribosomes during protein biosynthesis. The protein is Elongation factor Tu of Vesicomyosocius okutanii subsp. Calyptogena okutanii (strain HA).